The chain runs to 359 residues: Outer membrane protein assembly factor BamC (359 aa).

Residues methionine 1–serine 21 form the signal peptide. A lipid anchor (N-palmitoyl cysteine) is attached at cysteine 22. The S-diacylglycerol cysteine moiety is linked to residue cysteine 22.

This sequence belongs to the BamC family. Part of the Bam complex.

The protein resides in the cell outer membrane. Part of the outer membrane protein assembly complex, which is involved in assembly and insertion of beta-barrel proteins into the outer membrane. This is Outer membrane protein assembly factor BamC from Kangiella koreensis (strain DSM 16069 / JCM 12317 / KCTC 12182 / SW-125).